The primary structure comprises 66 residues: Large ribosomal subunit protein uL29 (66 aa).

This sequence belongs to the universal ribosomal protein uL29 family.

This Borrelia garinii subsp. bavariensis (strain ATCC BAA-2496 / DSM 23469 / PBi) (Borreliella bavariensis) protein is Large ribosomal subunit protein uL29.